An 85-amino-acid chain; its full sequence is MKAKQEIKKIKEFDYDAWIESKELKDIFPPRIMLLWWIGILGMLNYNLVQIVPNSGVALLSVSTFIVGCGLCIGFMLGIEQKKNR.

A run of 2 helical transmembrane segments spans residues 32 to 52 and 59 to 79; these read IMLL…VQIV and LLSV…MLGI.

The protein resides in the host membrane. The sequence is that of Putative transmembrane protein ORF28 from Haloarcula hispanica (His1V).